The primary structure comprises 259 residues: Bisphosphoglycerate mutase (259 aa).

S2 is subject to N-acetylserine. Substrate is bound by residues 10–17, 23–24, R62, 89–92, R100, and 116–117; these read RHGEGAWN, CS, ERHY, and RR. H11 acts as the Tele-phosphohistidine intermediate in catalysis. E89 (proton donor/acceptor) is an active-site residue. Position 122 is a phosphothreonine (T122). Residue 189 to 190 coordinates substrate; sequence GN.

The protein belongs to the phosphoglycerate mutase family. BPG-dependent PGAM subfamily. In terms of assembly, homodimer.

The catalysed reaction is (2R)-3-phospho-glyceroyl phosphate = (2R)-2,3-bisphosphoglycerate + H(+). The enzyme catalyses (2R)-2-phosphoglycerate = (2R)-3-phosphoglycerate. At alkaline pH BPGM favors the synthase reaction; however, at lower pH the phosphatase reaction is dominant. Inhibited by citrate. Functionally, plays a major role in regulating hemoglobin oxygen affinity by controlling the levels of its allosteric effector 2,3-bisphosphoglycerate (2,3-BPG). Also exhibits mutase (EC 5.4.2.11) activity. The polypeptide is Bisphosphoglycerate mutase (BPGM) (Bos taurus (Bovine)).